The chain runs to 394 residues: Lipase 3 (394 aa).

Positions 1–20 (MTRGALKVTILLVGLGLVLA) are cleaved as a signal peptide. Asn-131 carries an N-linked (GlcNAc...) asparagine glycan. Active-site charge relay system residues include Ser-164 and His-369.

The protein belongs to the AB hydrolase superfamily. Lipase family. Fat body.

The protein is Lipase 3 (Lip3) of Drosophila melanogaster (Fruit fly).